Here is a 481-residue protein sequence, read N- to C-terminus: Ankyrin repeat, SAM and basic leucine zipper domain-containing protein 1 (481 aa).

Residues 1 to 16 (MASGGLRGLAVAGGGE) show a composition bias toward gly residues. The segment at 1–23 (MASGGLRGLAVAGGGESSDSEDD) is disordered. A phosphoserine mark is found at S17, S18, and S20. ANK repeat units follow at residues 45–74 (EKNE…SVDS), 78–107 (YGWT…NASF), 110–144 (DKQT…DPNV), 148–177 (RLMT…EVNT), 181–210 (NGYT…NKML), and 214–243 (DGKI…PLEG). Positions 272–334 (SYTAFGDLEI…KILSALKELE (63 aa)) constitute an SAM domain.

Interacts with DDX4, PIWIL1, RANBP9 and TDRD1.

Its subcellular location is the cytoplasm. Functionally, plays a central role during spermatogenesis by repressing transposable elements and preventing their mobilization, which is essential for the germline integrity. Acts via the piRNA metabolic process, which mediates the repression of transposable elements during meiosis by forming complexes composed of piRNAs and Piwi proteins and governs the methylation and subsequent repression of transposons. Its association with pi-bodies suggests a participation in the primary piRNAs metabolic process. Required prior to the pachytene stage to facilitate the production of multiple types of piRNAs, including those associated with repeats involved in the regulation of retrotransposons. May act by mediating protein-protein interactions during germ cell maturation. The protein is Ankyrin repeat, SAM and basic leucine zipper domain-containing protein 1 (ASZ1) of Microcebus murinus (Gray mouse lemur).